A 1849-amino-acid polypeptide reads, in one-letter code: MYEGKKTKNMFLTRALEKILADKEVKKAHHSQLRKACEVALEEIKAETEKQSPPHGEAKAGSSTLPPVKSKTNFIEADKYFLPFELACQSKCPRIVSTSLDCLQKLIAYGHLTGNAPDSTTPGKKLIDRIIETICGCFQGPQTDEGVQLQIIKALLTAVTSQHIEIHEGTVLQAVRTCYNIYLASKNLINQTTAKATLTQMLNVIFARMENQALQEAKQMEKERHRQHHHLLQSPVSHHEPESPQLRYLPPQTVDHISQEHEGDLDLHTNDVDKSLQDDTEPENGSDISSAENEQTEADQATAAETLSKNEVLYDGENHDCEEKPQDIVQNIVEEMVNIVVGDMGEGTTINASADGNIGTIEDGSDSENIQANGIPGTPISVAYTPSLPDDRLSVSSNDTQESGNSSGPSPGAKFSHILQKDAFLVFRSLCKLSMKPLSDGPPDPKSHELRSKILSLQLLLSILQNAGPIFRTNEMFINAIKQYLCVALSKNGVSSVPEVFELSLSIFLTLLSNFKTHLKMQIEVFFKEIFLYILETSTSSFDHKWMVIQTLTRICADAQSVVDIYVNYDCDLNAANIFERLVNDLSKIAQGRGSQELGMSNVQELSLRKKGLECLVSILKCMVEWSKDQYVNPNSQTTLGQEKPSEQEMSEIKHPETINRYGSLNSLESTSSSGIGSYSTQMSGTDNPEQFEVLKQQKEIIEQGIDLFNKKPKRGIQYLQEQGMLGTTPEDIAQFLHQEERLDSTQVGEFLGDNDKFNKEVMYAYVDQHDFSGKDFVSALRMFLEGFRLPGEAQKIDRLMEKFAARYLECNQGQTLFASADTAYVLAYSIIMLTTDLHSPQVKNKMTKEQYIKMNRGINDSKDLPEEYLSAIYNEIAGKKISMKETKELTIPTKSSKQNVASEKQRRLLYNLEMEQMAKTAKALMEAVSHVQAPFTSATHLEHVRPMFKLAWTPFLAAFSVGLQDCDDTEVASLCLEGIRCAIRIACIFSIQLERDAYVQALARFTLLTVSSGITEMKQKNIDTIKTLITVAHTDGNYLGNSWHEILKCISQLELAQLIGTGVKPRYISGTVRGREGSLTGTKDQAPDEFVGLGLVGGNVDWKQIASIQESIGETSSQSVVVAVDRIFTGSTRLDGNAIVDFVRWLCAVSMDELLSTTHPRMFSLQKIVEISYYNMGRIRLQWSRIWEVIGDHFNKVGCNPNEDVAIFAVDSLRQLSMKFLEKGELANFRFQKDFLRPFEHIMKRNRSPTIRDMVVRCIAQMVNSQAANIRSGWKNIFSVFHLAASDQDESIVELAFQTTGHIVTLVFEKHFPATIDSFQDAVKCLSEFACNAAFPDTSMEAIRLIRHCAKYVSDRPQAFKEYTSDDMNVAPEDRVWVRGWFPILFELSCIINRCKLDVRTRGLTVMFEIMKTYGHTYEKHWWQDLFRIVFRIFDNMKLPEQQTEKAEWMTTTCNHALYAICDVFTQYLEVLSDVLLDDIFAQLYWCVQQDNEQLARSGTNCLENVVILNGEKFTLEIWDKTCNCTLDIFKTTIPHALLTWRPNSGETAPPPPSPVSEKPLDTISQKSVDIHDSIQPRSVDNRPQAPLVSASAVNEEVSKIKSTAKFPEQKLFAALLIKCVVQLELIQTIDNIVFFPATSKKEDAENLAAAQRDAVDFDVRVDTQDQGMYRFLTSQQLFKLLDCLLESHRFAKAFNSNNEQRTALWKAGFKGKSKPNLLKQETSSLACGLRILFRMYMDESRVSAWEEVQQRLLNVCSEALSYFLTLTSESHREAWTNLLLLFLTKVLKISDNRFKAHASFYYPLLCEIMQFDLIPELRAVLRRFFLRIGVVFQISQPPEQELGINKQ.

A DCB; DCB:DCB domain and DCB:HUS domain interaction region spans residues 2 to 224 (YEGKKTKNMF…QEAKQMEKER (223 aa)). A compositionally biased stretch (basic and acidic residues) spans 46-58 (AETEKQSPPHGEA). 4 disordered regions span residues 46-65 (AETE…SSTL), 216-248 (EAKQ…QLRY), 267-302 (LHTN…DQAT), and 378-413 (TPIS…SPGA). S52 bears the Phosphoserine mark. Over residues 267-277 (LHTNDVDKSLQ) the composition is skewed to basic and acidic residues. A phosphoserine mark is found at S286, S289, S290, S397, and S410. Polar residues predominate over residues 394–409 (SVSSNDTQESGNSSGP). Residues 557–577 (ADAQSVVDIYVNYDCDLNAAN) are HUS; DCB:HUS domain interaction. Residues 709 to 840 (FNKKPKRGIQ…IIMLTTDLHS (132 aa)) form the SEC7 domain. The Nuclear localization signal (NLS) motif lies at 711 to 715 (KKPKR). At S1079 the chain carries Phosphoserine. The tract at residues 1543-1562 (RPNSGETAPPPPSPVSEKPL) is disordered. Phosphoserine is present on residues S1566 and S1569.

In terms of assembly, homodimer. Interacts with ARFGEF2/BIG2; both proteins are probably part of the same or very similar macromolecular complexes. Interacts with FKBP2. Interacts with MYO9B. Interacts with PRKAR1A and PRKAR2A. Interacts with PPP1CC. Interacts with NCL, FBL, NUP62 and U3 small nucleolar RNA. Interacts with DPY30. Interacts with PDE3A. Interacts with KANK1. Interacts with TBC1D22A and TBC1D22B. Interacts (via N-terminus) with ARL1. Post-translationally, phosphorylated. In vitro phosphorylated by PKA reducing its GEF activity and dephosphorylated by phosphatase PP1. In terms of tissue distribution, expressed in placenta, lung, heart, brain, kidney and pancreas.

It is found in the cytoplasm. The protein localises to the perinuclear region. The protein resides in the golgi apparatus. Its subcellular location is the trans-Golgi network membrane. It localises to the nucleus. It is found in the nucleolus. The protein localises to the nucleus matrix. Its activity is regulated as follows. Inhibited by brefeldin A. Promotes guanine-nucleotide exchange on ARF1 and ARF3. Promotes the activation of ARF1/ARF3 through replacement of GDP with GTP. Involved in vesicular trafficking. Required for the maintenance of Golgi structure; the function may be independent of its GEF activity. Required for the maturation of integrin beta-1 in the Golgi. Involved in the establishment and persistence of cell polarity during directed cell movement in wound healing. Proposed to act as A kinase-anchoring protein (AKAP) and may mediate crosstalk between Arf and PKA pathways. Inhibits GAP activity of MYO9B probably through competitive RhoA binding. The function in the nucleus remains to be determined. This Homo sapiens (Human) protein is Brefeldin A-inhibited guanine nucleotide-exchange protein 1 (ARFGEF1).